Reading from the N-terminus, the 336-residue chain is Cyclin-H1-1 (336 aa).

At Ala2 the chain carries N-acetylalanine. Residues Lys297–Gly336 are disordered. Over residues Arg312–Arg322 the composition is skewed to basic residues.

It belongs to the cyclin family. As to quaternary structure, interacts with CDKA-1, CDKD-2 and CDKD-3, but not CDKD-1 and CDKF-1.

It localises to the cytoplasm. It is found in the nucleus. Functionally, associates with CDK-2 and CDK-3 and activates the CDK kinases. The chain is Cyclin-H1-1 (CYCH1-1) from Arabidopsis thaliana (Mouse-ear cress).